We begin with the raw amino-acid sequence, 41 residues long: uncharacterized protein (41 aa).

This is an uncharacterized protein from Dictyostelium discoideum (Social amoeba).